We begin with the raw amino-acid sequence, 166 residues long: Small ribosomal subunit protein uS5 (166 aa).

One can recognise an S5 DRBM domain in the interval Leu11–Val74.

This sequence belongs to the universal ribosomal protein uS5 family. In terms of assembly, part of the 30S ribosomal subunit. Contacts proteins S4 and S8.

In terms of biological role, with S4 and S12 plays an important role in translational accuracy. Located at the back of the 30S subunit body where it stabilizes the conformation of the head with respect to the body. This chain is Small ribosomal subunit protein uS5, found in Acinetobacter baumannii (strain ATCC 17978 / DSM 105126 / CIP 53.77 / LMG 1025 / NCDC KC755 / 5377).